A 967-amino-acid polypeptide reads, in one-letter code: Transmembrane channel-like protein 5 (967 aa).

4 stretches are compositionally biased toward polar residues: residues methionine 1–tyrosine 10, glycine 21–glutamate 31, asparagine 53–asparagine 62, and glutamine 168–proline 184. The interval methionine 1–lysine 240 is disordered. Residues methionine 1–lysine 420 are Extracellular-facing. A helical transmembrane segment spans residues phenylalanine 421–glycine 441. The Cytoplasmic portion of the chain corresponds to alanine 442–threonine 449. A helical transmembrane segment spans residues glycine 450–tyrosine 470. Residues threonine 471–glutamine 487 are Extracellular-facing. A helical membrane pass occupies residues leucine 488 to serine 508. Residues methionine 509–histidine 581 are Cytoplasmic-facing. A helical transmembrane segment spans residues valine 582–leucine 602. Topologically, residues alanine 603 to proline 616 are extracellular. A helical membrane pass occupies residues glycine 617–tyrosine 637. The Cytoplasmic portion of the chain corresponds to serine 638–asparagine 660. A helical membrane pass occupies residues isoleucine 661 to leucine 681. At serine 682–aspartate 694 the chain is on the extracellular side. Residues isoleucine 695–phenylalanine 715 traverse the membrane as a helical segment. Topologically, residues leucine 716–tryptophan 749 are cytoplasmic. Residues leucine 750–phenylalanine 770 form a helical membrane-spanning segment. Over tyrosine 771–phenylalanine 796 the chain is Extracellular. Residues phenylalanine 797–isoleucine 817 traverse the membrane as a helical segment. Over tryptophan 818–asparagine 861 the chain is Cytoplasmic. A helical transmembrane segment spans residues leucine 862–leucine 882. Residues tyrosine 883–alanine 967 lie on the Extracellular side of the membrane.

This sequence belongs to the TMC family. In terms of tissue distribution, ubiquitously expressed.

It is found in the membrane. Functionally, probable component of an ion channel. Molecular function hasn't been characterized yet. This Mus musculus (Mouse) protein is Transmembrane channel-like protein 5.